The chain runs to 593 residues: DNA primase (593 aa).

The CHC2-type zinc-finger motif lies at 38–62 (CPFHQEKTPSFTVSDSKRFFYCFGC). The Toprim domain maps to 250–332 (NRSILVEGYF…EKKISFIRLP (83 aa)). Mg(2+) is bound by residues glutamate 256, aspartate 300, and aspartate 302.

The protein belongs to the DnaG primase family. As to quaternary structure, monomer. Interacts with DnaB. It depends on Zn(2+) as a cofactor. Requires Mg(2+) as cofactor.

It carries out the reaction ssDNA + n NTP = ssDNA/pppN(pN)n-1 hybrid + (n-1) diphosphate.. Functionally, RNA polymerase that catalyzes the synthesis of short RNA molecules used as primers for DNA polymerase during DNA replication. The chain is DNA primase from Rickettsia prowazekii (strain Madrid E).